A 950-amino-acid chain; its full sequence is Protocadherin alpha-1 (950 aa).

The first 29 residues, 1 to 29 (MVFSRRGGLGARDLLLWLLLLAAWEVGSG), serve as a signal peptide directing secretion. Cadherin domains follow at residues 30–133 (QLHY…PPVF), 157–242 (AADA…APLF), 243–350 (DQAV…APEL), 351–455 (AVTS…APAF), 456–565 (AQPE…APAL), and 588–678 (GHVV…APKA). Topologically, residues 30–697 (QLHYSIPEEA…GPEAALVDVN (668 aa)) are extracellular. Asn-257 and Asn-265 each carry an N-linked (GlcNAc...) asparagine glycan. Asn-548 carries N-linked (GlcNAc...) asparagine glycosylation. The chain crosses the membrane as a helical span at residues 698–718 (VYLIIAICAVSSLLVLTLLLY). Residues 719–950 (TALRCSVPPT…GNSTTDNSDQ (232 aa)) are Cytoplasmic-facing. PXXP repeat units follow at residues 734–737 (PGKP), 799–802 (PRQP), 832–835 (PGGP), 873–876 (PGNP), and 891–894 (PGSP). A 5 X 4 AA repeats of P-X-X-P region spans residues 734–894 (PGKPTLVCSS…PDKFIIPGSP (161 aa)). 3 disordered regions span residues 752–808 (QQRR…DWRY), 828–856 (LRAG…EVSP), and 871–890 (YGPG…KFII). Residues 900 to 950 (RQEPTNSQIDKSDFITFGKKEETKKKKKKKKGNKTQEKKEKGNSTTDNSDQ) form a disordered region. Residues 909 to 923 (DKSDFITFGKKEETK) are compositionally biased toward basic and acidic residues.

The protein localises to the cell membrane. Its subcellular location is the secreted. In terms of biological role, potential calcium-dependent cell-adhesion protein. May be involved in the establishment and maintenance of specific neuronal connections in the brain. The polypeptide is Protocadherin alpha-1 (PCDHA1) (Homo sapiens (Human)).